Here is a 196-residue protein sequence, read N- to C-terminus: Large ribosomal subunit protein bL25 (196 aa).

Residues 177–196 (VISIAPPKKDAEAETESAAG) form a disordered region.

It belongs to the bacterial ribosomal protein bL25 family. CTC subfamily. Part of the 50S ribosomal subunit; part of the 5S rRNA/L5/L18/L25 subcomplex. Contacts the 5S rRNA. Binds to the 5S rRNA independently of L5 and L18.

Functionally, this is one of the proteins that binds to the 5S RNA in the ribosome where it forms part of the central protuberance. This chain is Large ribosomal subunit protein bL25, found in Chlorobium limicola (strain DSM 245 / NBRC 103803 / 6330).